Here is a 58-residue protein sequence, read N- to C-terminus: DNA-directed RNA polymerases I, II, and III subunit RPABC4 (58 aa).

4 residues coordinate Zn(2+): Cys-19, Cys-22, Cys-36, and Cys-39. The segment at 19-39 adopts a C4-type zinc-finger fold; sequence CGECHTENEIKSRDPIRCREC.

It belongs to the archaeal Rpo12/eukaryotic RPC10 RNA polymerase subunit family. Component of the RNA polymerase I (Pol I), RNA polymerase II (Pol II) and RNA polymerase III (Pol III) complexes consisting of at least 13, 12 and 17 subunits, respectively. Pol I complex consists of a ten-subunit catalytic core composed of POLR1A/RPA1, POLR1B/RPA2, POLR1C/RPAC1, POLR1D/RPAC2, POLR1H/RPA12, POLR2E/RPABC1, POLR2F/RPABC2, POLR2H/RPABC3, POLR2K/RPABC4 and POLR2L/RPABC5; a mobile stalk subunit POLR1F/RPA43 protruding from the core and additional subunits homologous to general transcription factors POLR1E/RPA49 and POLR1G/RPA34. Part of Pol I pre-initiation complex (PIC), in which Pol I core assembles with RRN3 and promoter-bound UTBF and SL1/TIF-IB complex. Pol II complex contains a ten-subunit catalytic core composed of POLR2A/RPB1, POLR2B/RPB2, POLR2C/RPB3, POLR2I/RPB9, POLR2J/RPB11, POLR2E/RPABC1, POLR2F/RPABC2, POLR2H/RPABC3, POLR2K/RPABC4 and POLR2L/RPABC5 and a mobile stalk composed of two subunits POLR2D/RPB4 and POLR2G/RPB7. Part of Pol II(G) complex, in which Pol II core associates with an additional subunit POLR2M; unlike conventional Pol II, Pol II(G) functions as a transcriptional repressor. Part of TBP-based Pol II pre-initiation complex (PIC), in which Pol II core assembles with general transcription factors and other specific initiation factors including GTF2E1, GTF2E2, GTF2F1, GTF2F2, TCEA1, ERCC2, ERCC3, GTF2H2, GTF2H3, GTF2H4, GTF2H5, GTF2A1, GTF2A2, GTF2B and TBP; this large multi-subunit PIC complex mediates DNA unwinding and targets Pol II core to the transcription start site where the first phosphodiester bond forms. Pol III complex consists of a ten-subunit catalytic core composed of POLR3A/RPC1, POLR3B/RPC2, POLR1C/RPAC1, POLR1D/RPAC2, POLR3K/RPC10, POLR2E/RPABC1, POLR2F/RPABC2, POLR2H/RPABC3, POLR2K/RPABC4 and POLR2L/RPABC5; a mobile stalk composed of two subunits POLR3H/RPC8 and CRCP/RPC9, protruding from the core and functioning primarily in transcription initiation; and additional subunits homologous to general transcription factors of the RNA polymerase II machinery, POLR3C/RPC3-POLR3F/RPC6-POLR3G/RPC7 heterotrimer required for transcription initiation and POLR3D/RPC4-POLR3E/RPC5 heterodimer involved in both transcription initiation and termination.

The protein localises to the nucleus. It is found in the nucleolus. DNA-dependent RNA polymerase catalyzes the transcription of DNA into RNA using the four ribonucleoside triphosphates as substrates. Common component of RNA polymerases I, II and III which synthesize ribosomal RNA precursors, mRNA precursors and many functional non-coding RNAs, and a small RNAs, such as 5S rRNA and tRNAs, respectively. This chain is DNA-directed RNA polymerases I, II, and III subunit RPABC4 (Polr2k), found in Mus musculus (Mouse).